A 343-amino-acid polypeptide reads, in one-letter code: N-acetyl-gamma-glutamyl-phosphate reductase (343 aa).

Residue cysteine 147 is part of the active site.

The protein belongs to the NAGSA dehydrogenase family. Type 1 subfamily.

The protein localises to the cytoplasm. The catalysed reaction is N-acetyl-L-glutamate 5-semialdehyde + phosphate + NADP(+) = N-acetyl-L-glutamyl 5-phosphate + NADPH + H(+). Its pathway is amino-acid biosynthesis; L-arginine biosynthesis; N(2)-acetyl-L-ornithine from L-glutamate: step 3/4. In terms of biological role, catalyzes the NADPH-dependent reduction of N-acetyl-5-glutamyl phosphate to yield N-acetyl-L-glutamate 5-semialdehyde. This is N-acetyl-gamma-glutamyl-phosphate reductase from Listeria monocytogenes serotype 4a (strain HCC23).